The following is an 837-amino-acid chain: Valine--tRNA ligase (837 aa).

A 'HIGH' region motif is present at residues 46–56; the sequence is PNLTGTLHIGH. A 'KMSKS' region motif is present at residues 514-518; the sequence is KMSKS. Lysine 517 serves as a coordination point for ATP. Residues 767 to 837 are a coiled coil; that stretch reads VDDTTQRLKS…QLIAKLTKAH (71 aa).

Belongs to the class-I aminoacyl-tRNA synthetase family. ValS type 1 subfamily. In terms of assembly, monomer.

The protein resides in the cytoplasm. The enzyme catalyses tRNA(Val) + L-valine + ATP = L-valyl-tRNA(Val) + AMP + diphosphate. Catalyzes the attachment of valine to tRNA(Val). As ValRS can inadvertently accommodate and process structurally similar amino acids such as threonine, to avoid such errors, it has a 'posttransfer' editing activity that hydrolyzes mischarged Thr-tRNA(Val) in a tRNA-dependent manner. This chain is Valine--tRNA ligase, found in Mycoplasma genitalium (strain ATCC 33530 / DSM 19775 / NCTC 10195 / G37) (Mycoplasmoides genitalium).